Consider the following 516-residue polypeptide: NADH-quinone oxidoreductase subunit N (516 aa).

Transmembrane regions (helical) follow at residues 12-32, 37-57, 81-101, 108-128, 131-151, 163-183, 213-233, 246-266, 274-294, 303-323, 341-361, 386-406, 419-439, and 491-511; these read LLPA…DLLV, VTIS…VLVG, LVAV…GPLL, VGEY…LGAA, LITL…LVGL, VTFF…AALL, VAVA…PFHA, VAAY…LAVV, ITGL…NLVA, LLAW…GALA, VAYT…VVAL, VGLA…AGLF, GAAG…AYYL, and VVLA…QLVL.

Belongs to the complex I subunit 2 family. In terms of assembly, NDH-1 is composed of 14 different subunits. Subunits NuoA, H, J, K, L, M, N constitute the membrane sector of the complex.

The protein resides in the cell membrane. The enzyme catalyses a quinone + NADH + 5 H(+)(in) = a quinol + NAD(+) + 4 H(+)(out). Functionally, NDH-1 shuttles electrons from NADH, via FMN and iron-sulfur (Fe-S) centers, to quinones in the respiratory chain. The immediate electron acceptor for the enzyme in this species is believed to be a menaquinone. Couples the redox reaction to proton translocation (for every two electrons transferred, four hydrogen ions are translocated across the cytoplasmic membrane), and thus conserves the redox energy in a proton gradient. The protein is NADH-quinone oxidoreductase subunit N of Salinispora tropica (strain ATCC BAA-916 / DSM 44818 / JCM 13857 / NBRC 105044 / CNB-440).